Consider the following 173-residue polypeptide: Pectinesterase inhibitor 2 (173 aa).

The first 25 residues, 1 to 25, serve as a signal peptide directing secretion; that stretch reads MAAYLTNRVLMSSLMFFVMTGSLNA. Residues Cys-34 and Cys-43 are joined by a disulfide bond. N-linked (GlcNAc...) asparagine glycosylation is found at Asn-39 and Asn-63. Cysteines 99 and 139 form a disulfide.

Belongs to the PMEI family. Interacts with PPME1. As to expression, highest expression in flowers. Expressed exclusively at the pollen tube tip.

The protein resides in the secreted. Its subcellular location is the extracellular space. The protein localises to the apoplast. Its function is as follows. Inhibits pectin methylesterase (PME) from flowers, siliques and pollen tube. The chain is Pectinesterase inhibitor 2 from Arabidopsis thaliana (Mouse-ear cress).